Here is a 339-residue protein sequence, read N- to C-terminus: MKHLKNNTKKFTALLFALLFSMSIAGCNMIEKTPEAIEKSPVAKVGKKTITRGELDTYPILAEQLTKLKEQFGGDLSKNAEIKDQLIQFKSQVLEQMIQEEIVFEKSEELKVDNAKVEKEVEKNLKNFMDQGFQGNKDKYKEDLKKMGTTEESIKRFFKAQVITEEVSKQVVKDVKVDDNTAKKHYEESKYTFTVNKPTFHAQHVLVKTEEEAKKVKARLDKGEDIKKIAKELSIDPSAKENSGDLGKAPYSSMVKPFADAIVKLNKGEISQPVKSQFGYHVIKLIDKDEVTFKDFNSVKEQIKKDLLETEKRKVFNEKIEQWKKELKVETKKYEKNII.

The first 26 residues, 1–26, serve as a signal peptide directing secretion; it reads MKHLKNNTKKFTALLFALLFSMSIAG. Cys27 carries the N-palmitoyl cysteine lipid modification. The S-diacylglycerol cysteine moiety is linked to residue Cys27. Residues 197–287 form the PpiC domain; it reads KPTFHAQHVL…FGYHVIKLID (91 aa).

This sequence belongs to the PrsA family.

It localises to the cell membrane. The catalysed reaction is [protein]-peptidylproline (omega=180) = [protein]-peptidylproline (omega=0). In terms of biological role, plays a major role in protein secretion by helping the post-translocational extracellular folding of several secreted proteins. This chain is Foldase protein PrsA, found in Clostridium tetani (strain Massachusetts / E88).